The chain runs to 95 residues: Protein TusB (95 aa).

The protein belongs to the DsrH/TusB family. In terms of assembly, heterohexamer, formed by a dimer of trimers. The hexameric TusBCD complex contains 2 copies each of TusB, TusC and TusD. The TusBCD complex interacts with TusE.

The protein resides in the cytoplasm. Its function is as follows. Part of a sulfur-relay system required for 2-thiolation of 5-methylaminomethyl-2-thiouridine (mnm(5)s(2)U) at tRNA wobble positions. In Salmonella arizonae (strain ATCC BAA-731 / CDC346-86 / RSK2980), this protein is Protein TusB.